The sequence spans 556 residues: METTLRGVGVSHGVAIGEVRHMGTAVLEPPAKQIPAEDAEREQGRARKAVEAVAADLMARGNLAGGEAQAVLEAQAMMAQDPELLADVERRITVGSTAERAVYDAFAAYRALLAGAGEYLAGRVADLDDVRNRIVARLLGVPMPGVPDSDEPYVLIARDLAPADTALLDPTLVLGFVTEEGGPTSHSAILARALGVPAVVALPGAGEIPEGTVVAVDGSTGEIFVNPAEEKKARLAAEAAERKAALAAATGPGATSDGHKVPLLANIGGPADVPAAVEAGAEGVGLFRTEFLFLDDSANAPSEEKQITAYRQVLEAFPEGRVVVRVLDAGADKPLDFLTPGDEPNPALGVRGLRTLLDHPDVLRTQLTALAKAAEGLPVYLEVMAPMVADRADAKAFADACREAGLRAKFGAMVEIPSAALRARSVLQEVEFLSLGTNDLAQYTFAADRQVGAVSRLQDPWQPALLDLVALSAEAAKAEGKSCGVCGEAAADPLLACVLTGLGVTSLSMGAASLPYVRATLAKFTLAQCERAAAAARAADSAEEARTAAQAVLSGE.

H186 acts as the Tele-phosphohistidine intermediate in catalysis. Residues R288 and R325 each coordinate phosphoenolpyruvate. 2 residues coordinate Mg(2+): E415 and D439. Phosphoenolpyruvate is bound by residues 438 to 439 (ND) and R449. The Proton donor role is filled by C486.

This sequence belongs to the PEP-utilizing enzyme family. Homodimer. The cofactor is Mg(2+).

It is found in the cytoplasm. It catalyses the reaction L-histidyl-[protein] + phosphoenolpyruvate = N(pros)-phospho-L-histidyl-[protein] + pyruvate. Its function is as follows. General (non sugar-specific) component of the phosphoenolpyruvate-dependent sugar phosphotransferase system (sugar PTS). This major carbohydrate active-transport system catalyzes the phosphorylation of incoming sugar substrates concomitantly with their translocation across the cell membrane. Enzyme I transfers the phosphoryl group from phosphoenolpyruvate (PEP) to the phosphoryl carrier protein (HPr). This Streptomyces coelicolor (strain ATCC BAA-471 / A3(2) / M145) protein is Phosphoenolpyruvate-protein phosphotransferase (ptsI).